Reading from the N-terminus, the 194-residue chain is NADPH-flavin oxidoreductase (194 aa).

This sequence belongs to the non-flavoprotein flavin reductase family. In terms of assembly, homodimer. It can form an isobutylamine N-hydroxylase two component enzyme system formed of a flavin reductase component (VlmR) and a monooxygenase component (VlmH).

It carries out the reaction FADH2 + NADP(+) = FAD + NADPH + 2 H(+). It catalyses the reaction FMNH2 + NADP(+) = FMN + NADPH + 2 H(+). Functionally, involved in the biosynthesis of the azoxy antibiotic valanimycin, which has an antitumor activity. Catalyzes the reduction of FAD/FMN to FADH(2)/FMNH(2) which are subsequently used for the hydroxylation of isobutylamine by the isobutylamine N-hydroxylase VlmH. It can reduce either FAD or flavin mononucleotide (FMN) but prefers FAD. The enzyme has a strong preference for NADPH as acceptor. This is NADPH-flavin oxidoreductase from Streptomyces viridifaciens.